Here is a 123-residue protein sequence, read N- to C-terminus: Large ribosomal subunit protein uL29 (123 aa).

It belongs to the universal ribosomal protein uL29 family. As to quaternary structure, component of the large ribosomal subunit.

It localises to the cytoplasm. In terms of biological role, component of the large ribosomal subunit. The ribosome is a large ribonucleoprotein complex responsible for the synthesis of proteins in the cell. The polypeptide is Large ribosomal subunit protein uL29 (rpl35) (Ictalurus punctatus (Channel catfish)).